The following is a 119-amino-acid chain: NADH-quinone oxidoreductase subunit A (119 aa).

Transmembrane regions (helical) follow at residues 9–29 (VLLF…LGYV), 63–83 (LVAI…PWAV), and 88–108 (VGVT…VGFA).

Belongs to the complex I subunit 3 family. As to quaternary structure, NDH-1 is composed of 14 different subunits. Subunits NuoA, H, J, K, L, M, N constitute the membrane sector of the complex.

The protein resides in the cell inner membrane. The enzyme catalyses a quinone + NADH + 5 H(+)(in) = a quinol + NAD(+) + 4 H(+)(out). Its function is as follows. NDH-1 shuttles electrons from NADH, via FMN and iron-sulfur (Fe-S) centers, to quinones in the respiratory chain. The immediate electron acceptor for the enzyme in this species is believed to be ubiquinone. Couples the redox reaction to proton translocation (for every two electrons transferred, four hydrogen ions are translocated across the cytoplasmic membrane), and thus conserves the redox energy in a proton gradient. The chain is NADH-quinone oxidoreductase subunit A from Acidovorax sp. (strain JS42).